The chain runs to 460 residues: Putative protein p41 (460 aa).

The 173-residue stretch at 14 to 186 (INHLLDIKRS…WGQAWFVDQG (173 aa)) folds into the Helicase ATP-binding domain.

In Escherichia coli (Bacteriophage APSE-1), this protein is Putative protein p41 (41).